Here is a 153-residue protein sequence, read N- to C-terminus: 3-hydroxyacyl-[acyl-carrier-protein] dehydratase FabZ (153 aa).

Residue H54 is part of the active site.

It belongs to the thioester dehydratase family. FabZ subfamily.

Its subcellular location is the cytoplasm. The enzyme catalyses a (3R)-hydroxyacyl-[ACP] = a (2E)-enoyl-[ACP] + H2O. Its function is as follows. Involved in unsaturated fatty acids biosynthesis. Catalyzes the dehydration of short chain beta-hydroxyacyl-ACPs and long chain saturated and unsaturated beta-hydroxyacyl-ACPs. The sequence is that of 3-hydroxyacyl-[acyl-carrier-protein] dehydratase FabZ from Shewanella amazonensis (strain ATCC BAA-1098 / SB2B).